The chain runs to 199 residues: Thymidine kinase (199 aa).

ATP contacts are provided by residues 23–30 and 95–98; these read GSMFSGKT and DEAQ. E96 functions as the Proton acceptor in the catalytic mechanism. Zn(2+) is bound by residues C152, C155, C184, and C187.

The protein belongs to the thymidine kinase family. In terms of assembly, homotetramer.

It localises to the cytoplasm. The catalysed reaction is thymidine + ATP = dTMP + ADP + H(+). The sequence is that of Thymidine kinase from Bacteroides fragilis (strain YCH46).